The primary structure comprises 513 residues: Alanine--glyoxylate aminotransferase 2, mitochondrial (513 aa).

The transit peptide at 1–40 directs the protein to the mitochondrion; that stretch reads MSLAWRNLQKPFYLETSLRILQMRPSLSLGASRIAVPKLT. The residue at position 56 (Lys-56) is an N6-acetyllysine. N6-acetyllysine; alternate is present on Lys-70. An N6-succinyllysine; alternate modification is found at Lys-70. Residue Lys-83 is modified to N6-acetyllysine. Lys-261 is modified (N6-acetyllysine; alternate). Residue Lys-261 is modified to N6-succinyllysine; alternate. An N6-succinyllysine modification is found at Lys-303. Lys-349 bears the N6-(pyridoxal phosphate)lysine mark. 2 positions are modified to N6-acetyllysine; alternate: Lys-416 and Lys-419. 2 positions are modified to N6-succinyllysine; alternate: Lys-416 and Lys-419. Lys-453 carries the post-translational modification N6-acetyllysine.

Belongs to the class-III pyridoxal-phosphate-dependent aminotransferase family. Homotetramer. It depends on pyridoxal 5'-phosphate as a cofactor. Expressed in the liver and kidney.

The protein localises to the mitochondrion. The catalysed reaction is glyoxylate + L-alanine = glycine + pyruvate. It carries out the reaction (R)-3-amino-2-methylpropanoate + pyruvate = 2-methyl-3-oxopropanoate + L-alanine. It catalyses the reaction 3-oxopropanoate + L-alanine = beta-alanine + pyruvate. The enzyme catalyses 2-oxobutanoate + L-alanine = (2S)-2-aminobutanoate + pyruvate. The catalysed reaction is N(omega),N(omega)-dimethyl-L-arginine + pyruvate = 5-(3,3-dimethylguanidino)-2-oxopentanoate + L-alanine. It carries out the reaction N(omega),N('omega)-dimethyl-L-arginine + pyruvate = 5-(3,3'-dimethylguanidino)-2-oxopentanoate + L-alanine. It catalyses the reaction N(omega),N(omega)-dimethyl-L-arginine + glyoxylate = 5-(3,3-dimethylguanidino)-2-oxopentanoate + glycine. The enzyme catalyses N(omega),N('omega)-dimethyl-L-arginine + glyoxylate = 5-(3,3'-dimethylguanidino)-2-oxopentanoate + glycine. The catalysed reaction is N(omega)-methyl-L-arginine + pyruvate = 5-(3-methylguanidino)-2-oxopentanoate + L-alanine. It carries out the reaction N(omega)-methyl-L-arginine + glyoxylate = 5-(3-methylguanidino)-2-oxopentanoate + glycine. It catalyses the reaction L-ornithine + pyruvate = 5-amino-2-oxopentanoate + L-alanine. The enzyme catalyses L-ornithine + glyoxylate = 5-amino-2-oxopentanoate + glycine. The catalysed reaction is (2S)-2-aminobutanoate + glyoxylate = 2-oxobutanoate + glycine. It carries out the reaction N(omega),N(omega)-dimethyl-L-arginine + oxaloacetate = 5-(3,3-dimethylguanidino)-2-oxopentanoate + L-aspartate. It catalyses the reaction oxaloacetate + L-alanine = L-aspartate + pyruvate. The enzyme catalyses N(omega),N(omega)-dimethyl-L-arginine + 2-oxobutanoate = 5-(3,3-dimethylguanidino)-2-oxopentanoate + (2S)-2-aminobutanoate. The catalysed reaction is 2-oxopentanoate + N(omega),N(omega)-dimethyl-L-arginine = 5-(3,3-dimethylguanidino)-2-oxopentanoate + L-2-aminopentanoate. It carries out the reaction 2-oxohexanoate + N(omega),N(omega)-dimethyl-L-arginine = L-2-aminohexanoate + 5-(3,3-dimethylguanidino)-2-oxopentanoate. With respect to regulation, (R)-3-amino-2-methylpropionate--pyruvate transaminase and beta-alanine-pyruvate aminotransferase are inhibited by aminooxyacetic acid. Multifunctional aminotransferase with a broad substrate specificity. Catalyzes the conversion of glyoxylate to glycine using alanine as the amino donor. Catalyzes metabolism of not L- but the D-isomer of D-beta-aminoisobutyric acid to generate 2-methyl-3-oxopropanoate and alanine. Catalyzes the transfer of the amino group from beta-alanine to pyruvate to yield L-alanine and 3-oxopropanoate. Can metabolize NG-monomethyl-L-arginine (NMMA), asymmetric NG,NG-dimethyl-L-arginine (ADMA) and symmetric NG,N'G-dimethyl-L-arginine (SDMA). ADMA is a potent inhibitor of nitric-oxide (NO) synthase, and this activity provides mechanism through which the kidney regulates blood pressure. This is Alanine--glyoxylate aminotransferase 2, mitochondrial (Agxt2) from Mus musculus (Mouse).